A 366-amino-acid polypeptide reads, in one-letter code: uncharacterized protein (366 aa).

One can recognise an OBG-type G domain in the interval glycine 64–asparagine 289. GTP-binding positions include glycine 70–serine 77, aspartate 116–isoleucine 120, and asparagine 247–aspartate 250. In terms of domain architecture, TGS spans asparagine 289–lysine 365.

Belongs to the TRAFAC class OBG-HflX-like GTPase superfamily. OBG GTPase family.

This is an uncharacterized protein from Schizosaccharomyces pombe (strain 972 / ATCC 24843) (Fission yeast).